Here is a 338-residue protein sequence, read N- to C-terminus: Hydroxyproline O-galactosyltransferase HPGT1 (338 aa).

The Cytoplasmic portion of the chain corresponds to 1-12 (MARKGSSIRLSS). A helical; Signal-anchor for type II membrane protein transmembrane segment spans residues 13 to 32 (SRISTLLLFMFATFASFYVA). Topologically, residues 33–338 (GRLWQESQTR…WSSEAICAGV (306 aa)) are lumenal.

Belongs to the glycosyltransferase 31 family. The cofactor is Mn(2+). In terms of tissue distribution, expressed in roots, rosette leaves, cauline leaves, stems, flowers and siliques.

Its subcellular location is the golgi apparatus membrane. It functions in the pathway protein modification; protein glycosylation. Its function is as follows. Possesses hydroxyproline O-galactosyltransferase activity. Transfers galactose from UDP-galactose to hydroxyproline residues in the arabinogalactan proteins (AGPs). Is specific for AGPs containing non-contiguous peptidyl hydroxyproline residues. The addition of galactose onto the peptidyl hydroxyproline residues in AGP core proteins represents the first committed step in arabinogalactan polysaccharide addition. AGP glycans play essential roles in both vegetative and reproductive plant growth. This Arabidopsis thaliana (Mouse-ear cress) protein is Hydroxyproline O-galactosyltransferase HPGT1.